Consider the following 484-residue polypeptide: Probable glycine dehydrogenase (decarboxylating) subunit 2 (484 aa).

Residue K264 is modified to N6-(pyridoxal phosphate)lysine.

The protein belongs to the GcvP family. C-terminal subunit subfamily. The glycine cleavage system is composed of four proteins: P, T, L and H. In this organism, the P 'protein' is a heterodimer of two subunits. Pyridoxal 5'-phosphate serves as cofactor.

It carries out the reaction N(6)-[(R)-lipoyl]-L-lysyl-[glycine-cleavage complex H protein] + glycine + H(+) = N(6)-[(R)-S(8)-aminomethyldihydrolipoyl]-L-lysyl-[glycine-cleavage complex H protein] + CO2. In terms of biological role, the glycine cleavage system catalyzes the degradation of glycine. The P protein binds the alpha-amino group of glycine through its pyridoxal phosphate cofactor; CO(2) is released and the remaining methylamine moiety is then transferred to the lipoamide cofactor of the H protein. The polypeptide is Probable glycine dehydrogenase (decarboxylating) subunit 2 (Legionella pneumophila subsp. pneumophila (strain Philadelphia 1 / ATCC 33152 / DSM 7513)).